Reading from the N-terminus, the 439-residue chain is L-tryptophan decarboxylase (439 aa).

This sequence belongs to the phosphatidylserine decarboxylase family.

It carries out the reaction L-tryptophan + H(+) = tryptamine + CO2. It functions in the pathway secondary metabolite biosynthesis. L-tryptophan decarboxylase; part of the gene cluster that mediates the biosynthesis of psilocybin, a psychotropic tryptamine-derived natural product. The first step in the pathway is the decarboxylation of L-tryptophan to tryptamine by the decarboxylase psiD. 4-hydroxy-L-tryptophan is accepted as substrate by psiD as well. The cytochrome P450 monooxygenase psiH then converts tryptamine to 4-hydroxytryptamine. The kinase psiK catalyzes the 4-O-phosphorylation step by converting 4-hydroxytryptamine into norbaeocystin. The methyltransferase psiM then catalyzes iterative methyl transfer to the amino group of norbaeocystin to yield psilocybin via a monomethylated intermediate, baeocystin. 4-hydroxy-6-methyl-l-tryptophancan also be converted the decarboxylase PsiD, kinase PsiK, and methyltransferase PsiM into respectively 6-methyl-norbaeocystin, 6-methylbaeocystin, and 6-methylpsilocybin. The chain is L-tryptophan decarboxylase from Psilocybe cubensis (Psychedelic mushroom).